Here is a 199-residue protein sequence, read N- to C-terminus: Protein GrpE (199 aa).

Residues methionine 1–leucine 27 are disordered. The segment covering aspartate 18–leucine 27 has biased composition (basic and acidic residues).

Belongs to the GrpE family. Homodimer.

It is found in the cytoplasm. Participates actively in the response to hyperosmotic and heat shock by preventing the aggregation of stress-denatured proteins, in association with DnaK and GrpE. It is the nucleotide exchange factor for DnaK and may function as a thermosensor. Unfolded proteins bind initially to DnaJ; upon interaction with the DnaJ-bound protein, DnaK hydrolyzes its bound ATP, resulting in the formation of a stable complex. GrpE releases ADP from DnaK; ATP binding to DnaK triggers the release of the substrate protein, thus completing the reaction cycle. Several rounds of ATP-dependent interactions between DnaJ, DnaK and GrpE are required for fully efficient folding. This chain is Protein GrpE, found in Psychrobacter sp. (strain St1).